The sequence spans 338 residues: Serpentine receptor class alpha-32 (338 aa).

The next 7 helical transmembrane spans lie at 30–50 (VYVI…IHAI), 63–83 (ITHL…SYTI), 120–140 (RFLF…VILF), 152–172 (GEIL…LLHL), 199–219 (LTSY…MMWY), 249–269 (LNSL…FVLA), and 289–309 (TTPY…QWIG).

This sequence belongs to the nematode receptor-like protein sra family.

It is found in the membrane. The sequence is that of Serpentine receptor class alpha-32 (sra-32) from Caenorhabditis elegans.